The sequence spans 63 residues: Metallothionein-2 (63 aa).

A beta region spans residues 1–30; it reads MDPQDCTCAAGDSCSCAGSCKCKNCRCQSC. A divalent metal cation contacts are provided by Cys-6, Cys-8, Cys-14, Cys-16, Cys-20, Cys-22, Cys-25, Cys-27, Cys-30, Cys-34, Cys-35, Cys-37, Cys-38, Cys-42, Cys-45, Cys-49, Cys-51, Cys-59, Cys-61, and Cys-62. The segment at 31 to 63 is alpha; sequence RKSCCSCCPASCSNCAKGCVCKEPSSSKCSCCH.

Belongs to the metallothionein superfamily. Type 1 family.

In terms of biological role, metallothioneins have a high content of cysteine residues that bind various heavy metals. The sequence is that of Metallothionein-2 from Columba livia (Rock dove).